We begin with the raw amino-acid sequence, 189 residues long: Adenylate kinase (189 aa).

11-16 (GSGKGT) lines the ATP pocket. The segment at 31–60 (STGDVLRAEIKNGTELGKTAKGYIDQGQLI) is NMP. AMP-binding positions include Thr-32, Arg-37, 58-60 (QLI), 86-89 (GFPR), and Gln-93. Residues 127–137 (KRGKESGRADD) are LID. Arg-128 lines the ATP pocket. Positions 134 and 145 each coordinate AMP. ATP is bound at residue Gly-173.

The protein belongs to the adenylate kinase family. As to quaternary structure, monomer.

The protein localises to the cytoplasm. The catalysed reaction is AMP + ATP = 2 ADP. Its pathway is purine metabolism; AMP biosynthesis via salvage pathway; AMP from ADP: step 1/1. Functionally, catalyzes the reversible transfer of the terminal phosphate group between ATP and AMP. Plays an important role in cellular energy homeostasis and in adenine nucleotide metabolism. This Bacteroides fragilis (strain ATCC 25285 / DSM 2151 / CCUG 4856 / JCM 11019 / LMG 10263 / NCTC 9343 / Onslow / VPI 2553 / EN-2) protein is Adenylate kinase.